The sequence spans 63 residues: MNFSRILFFVFACFVALASVSAAPEPRWKVFKKIEKVGRNIRDGVIKAGPAIAVVGQAKALGK.

The first 22 residues, 1-22 (MNFSRILFFVFACFVALASVSA), serve as a signal peptide directing secretion. The propeptide at 23-26 (APEP) is removed by a dipeptidylpeptidase. Residue Leu-61 is modified to Leucine amide.

The protein belongs to the cecropin family.

It localises to the secreted. Functionally, has antibacterial activity. The polypeptide is Hyphancin-3F (Hyphantria cunea (Fall webworm moth)).